The primary structure comprises 228 residues: Phosphatidylserine decarboxylase proenzyme (228 aa).

Residue S197 is the Schiff-base intermediate with substrate; via pyruvic acid of the active site. Residue S197 is modified to Pyruvic acid (Ser); by autocatalysis.

The protein belongs to the phosphatidylserine decarboxylase family. PSD-A subfamily. In terms of assembly, heterodimer of a large membrane-associated beta subunit and a small pyruvoyl-containing alpha subunit. Requires pyruvate as cofactor. In terms of processing, is synthesized initially as an inactive proenzyme. Formation of the active enzyme involves a self-maturation process in which the active site pyruvoyl group is generated from an internal serine residue via an autocatalytic post-translational modification. Two non-identical subunits are generated from the proenzyme in this reaction, and the pyruvate is formed at the N-terminus of the alpha chain, which is derived from the carboxyl end of the proenzyme. The post-translation cleavage follows an unusual pathway, termed non-hydrolytic serinolysis, in which the side chain hydroxyl group of the serine supplies its oxygen atom to form the C-terminus of the beta chain, while the remainder of the serine residue undergoes an oxidative deamination to produce ammonia and the pyruvoyl prosthetic group on the alpha chain.

The protein resides in the cell membrane. The catalysed reaction is a 1,2-diacyl-sn-glycero-3-phospho-L-serine + H(+) = a 1,2-diacyl-sn-glycero-3-phosphoethanolamine + CO2. It participates in phospholipid metabolism; phosphatidylethanolamine biosynthesis; phosphatidylethanolamine from CDP-diacylglycerol: step 2/2. Its function is as follows. Catalyzes the formation of phosphatidylethanolamine (PtdEtn) from phosphatidylserine (PtdSer). This Phocaeicola vulgatus (strain ATCC 8482 / DSM 1447 / JCM 5826 / CCUG 4940 / NBRC 14291 / NCTC 11154) (Bacteroides vulgatus) protein is Phosphatidylserine decarboxylase proenzyme.